The sequence spans 344 residues: uncharacterized protein (344 aa).

This sequence belongs to the glycosyltransferase 28 family.

This is an uncharacterized protein from Methanopyrus kandleri (strain AV19 / DSM 6324 / JCM 9639 / NBRC 100938).